A 394-amino-acid polypeptide reads, in one-letter code: NAD(P)H-quinone oxidoreductase subunit H 2 (394 aa).

This sequence belongs to the complex I 49 kDa subunit family. NDH-1 can be composed of about 15 different subunits; different subcomplexes with different compositions have been identified which probably have different functions.

Its subcellular location is the cell inner membrane. It carries out the reaction a plastoquinone + NADH + (n+1) H(+)(in) = a plastoquinol + NAD(+) + n H(+)(out). It catalyses the reaction a plastoquinone + NADPH + (n+1) H(+)(in) = a plastoquinol + NADP(+) + n H(+)(out). Its function is as follows. NDH-1 shuttles electrons from an unknown electron donor, via FMN and iron-sulfur (Fe-S) centers, to quinones in the respiratory and/or the photosynthetic chain. The immediate electron acceptor for the enzyme in this species is believed to be plastoquinone. Couples the redox reaction to proton translocation, and thus conserves the redox energy in a proton gradient. Cyanobacterial NDH-1 also plays a role in inorganic carbon-concentration. In Gloeobacter violaceus (strain ATCC 29082 / PCC 7421), this protein is NAD(P)H-quinone oxidoreductase subunit H 2.